A 20-amino-acid chain; its full sequence is Dermaseptin-N1 (20 aa).

Leucine amide is present on leucine 20.

As to expression, expressed by the skin glands.

Its subcellular location is the secreted. In terms of biological role, antimicrobial peptide with moderate activity against both Gram-positive and Gram-negative bacteria, and important activity against Leishmania species (L.amazonensis and L.infantum). Acts on both Leishmania promastigote and amastigote forms. Shows activity against E.coli (MIC=17.8 uM), S.aureus (MIC=32.3 uM) and the phytopathogenic bacterium Xanthomonas axonopodis (MIC=2 uM). Shows low cytotoxicity against mammalian cells in models of peritoneal macrophages. The polypeptide is Dermaseptin-N1 (Pithecopus nordestinus (Northeastern Brazilian leaf frog)).